Consider the following 451-residue polypeptide: UDP-N-acetylmuramoylalanine--D-glutamate ligase (451 aa).

Gly119 to Thr125 contacts ATP.

The protein belongs to the MurCDEF family.

Its subcellular location is the cytoplasm. The catalysed reaction is UDP-N-acetyl-alpha-D-muramoyl-L-alanine + D-glutamate + ATP = UDP-N-acetyl-alpha-D-muramoyl-L-alanyl-D-glutamate + ADP + phosphate + H(+). Its pathway is cell wall biogenesis; peptidoglycan biosynthesis. In terms of biological role, cell wall formation. Catalyzes the addition of glutamate to the nucleotide precursor UDP-N-acetylmuramoyl-L-alanine (UMA). This is UDP-N-acetylmuramoylalanine--D-glutamate ligase from Streptococcus agalactiae serotype III (strain NEM316).